A 20-amino-acid chain; its full sequence is 2-oxo-acid reductase (20 aa).

It belongs to the AOR/FOR family. Forms various types of homooligomers. It depends on [4Fe-4S] cluster as a cofactor. Mo-molybdopterin is required as a cofactor.

The protein localises to the cell membrane. The enzyme catalyses a (2R)-2-hydroxycarboxylate + A = a 2-oxocarboxylate + AH2. Its activity is regulated as follows. Is inhibited by cyanide. Is sensitive to oxygen. Functionally, oxidoreductase with an extremely broad substrate specificity that can reduce reversibly 2-oxocarboxylates to (2R)-hydroxycarboxylates. This is 2-oxo-acid reductase from Proteus hauseri.